Reading from the N-terminus, the 525-residue chain is Putative ribose/galactose/methyl galactoside import ATP-binding protein (525 aa).

The segment covering 1-15 has biased composition (polar residues); sequence MFGSATANPPAQRNL. The tract at residues 1 to 23 is disordered; the sequence is MFGSATANPPAQRNLPSGDGDGG. 2 ABC transporter domains span residues 33 to 269 and 279 to 523; these read LEIS…VGRE and KPAG…SGHK. 65-72 serves as a coordination point for ATP; the sequence is GENGAGKS.

Belongs to the ABC transporter superfamily. Carbohydrate importer 2 (CUT2) (TC 3.A.1.2) family.

The protein localises to the cell inner membrane. It catalyses the reaction D-ribose(out) + ATP + H2O = D-ribose(in) + ADP + phosphate + H(+). The catalysed reaction is D-galactose(out) + ATP + H2O = D-galactose(in) + ADP + phosphate + H(+). Functionally, part of an ABC transporter complex involved in carbohydrate import. Could be involved in ribose, galactose and/or methyl galactoside import. Responsible for energy coupling to the transport system. In Pseudomonas syringae pv. syringae (strain B728a), this protein is Putative ribose/galactose/methyl galactoside import ATP-binding protein.